A 189-amino-acid chain; its full sequence is MSKLLKLVIVGDGGVGKSALTIQLTQNQFIAEYDPTIENSYRKQVNIDEEVYMLDILDTAGQEEYSAMRDQYIRSGRGFLIVYSIISRASFEAVTTFREQILRVKDLSTYPIVIIGNKADLPDKDRKVPPMEGKELAKSFGAPFLETSAKSRVNVEEAFFTLVREIKRWNQNPQNEEMLPPKKRGCIIL.

Residue 11–18 (GDGGVGKS) participates in GTP binding. Residues 33-41 (YDPTIENSY) carry the Effector region motif. GTP is bound by residues 58-62 (DTAGQ) and 117-120 (NKAD). A Cysteine methyl ester modification is found at cysteine 186. Cysteine 186 is lipidated: S-geranylgeranyl cysteine. Positions 187 to 189 (IIL) are cleaved as a propeptide — removed in mature form.

It belongs to the small GTPase superfamily. Ras family.

The protein localises to the cell membrane. It carries out the reaction GTP + H2O = GDP + phosphate + H(+). Its activity is regulated as follows. Alternates between an inactive form bound to GDP and an active form bound to GTP. Activated by a guanine nucleotide-exchange factor (GEF) and inactivated by a GTPase-activating protein (GAP). Its function is as follows. Ras proteins bind GDP/GTP and possess intrinsic GTPase activity. This Dictyostelium discoideum (Social amoeba) protein is Ras-like protein rasC (rasC).